Reading from the N-terminus, the 235-residue chain is Phosphoribosylaminoimidazole-succinocarboxamide synthase (235 aa).

This sequence belongs to the SAICAR synthetase family.

The enzyme catalyses 5-amino-1-(5-phospho-D-ribosyl)imidazole-4-carboxylate + L-aspartate + ATP = (2S)-2-[5-amino-1-(5-phospho-beta-D-ribosyl)imidazole-4-carboxamido]succinate + ADP + phosphate + 2 H(+). It participates in purine metabolism; IMP biosynthesis via de novo pathway; 5-amino-1-(5-phospho-D-ribosyl)imidazole-4-carboxamide from 5-amino-1-(5-phospho-D-ribosyl)imidazole-4-carboxylate: step 1/2. The chain is Phosphoribosylaminoimidazole-succinocarboxamide synthase from Clostridium beijerinckii (strain ATCC 51743 / NCIMB 8052) (Clostridium acetobutylicum).